The primary structure comprises 695 residues: Tripartite terminase subunit 1 (695 aa).

A C3H1-type zinc finger spans residues 182-210 (CLECLQEVCLTPNQGTSLQAMLPDTACSH). ATP is bound at residue 621–628 (YNRTWERE).

Belongs to the herpesviridae TRM1 protein family. In terms of assembly, associates with TRM2 and TRM3 to form the tripartite terminase complex. Interacts with portal protein.

It is found in the host nucleus. In terms of biological role, component of the molecular motor that translocates viral genomic DNA in empty capsid during DNA packaging. Forms a tripartite terminase complex together with TRM2 and TRM3 in the host cytoplasm. Once the complex reaches the host nucleus, it interacts with the capsid portal vertex. This portal forms a ring in which genomic DNA is translocated into the capsid. TRM1 carries an endonuclease activity that plays an important role for the cleavage of concatemeric viral DNA into unit length genomes. The protein is Tripartite terminase subunit 1 of Homo sapiens (Human).